The primary structure comprises 466 residues: MMADLMRIEHDSMGTIEVPAGVLWGAQTQRSLLNFAISTDRMPVELIHALALIKQAAASVNCRLGVLDEVQRDQIIKAASAVASGLHDDQFPLRVWQTGSGTHTNMNVNEVISNLASQANDEPLGSHRPVHPNDHVNRSQSTNDAFPTAIHIAAVQGITNNLLPELEQLIAAFARKSDAWSDIIKIGRTHLQDAVPLTLGQEASAWRDQIASAHSRIQSSLIELYPLPLGGTAVGTGLNAPARFGQETAAQLASITGLPFSSAKNKFAVMASHDGLVNAMAQLRMLAVALFKISNDLRLLACGPRAGLAELHLPENEPGSSIMPGKVNPSQCEAMAMVCLQVIGLDSAVTMAGGSGHLQMNVYKPLIGFNLLHSIELLHDACRKYRLAMVQGIEPNRIKIQHDLEQSLMLVTALAPEIGYDKASEIAHLAHEKGFSLREAALKLGYVSKEDFDRIVNPALMTSARL.

Substrate contacts are provided by residues 100-102 (SGT), Arg-128, 131-134 (HPND), 141-143 (STN), and Thr-189. Catalysis depends on His-190, which acts as the Proton donor/acceptor. Residue Ser-320 is part of the active site. Residues Ser-321 and 326-328 (KVN) contribute to the substrate site.

The protein belongs to the class-II fumarase/aspartase family. Fumarase subfamily. As to quaternary structure, homotetramer.

The protein localises to the cytoplasm. It carries out the reaction (S)-malate = fumarate + H2O. The protein operates within carbohydrate metabolism; tricarboxylic acid cycle; (S)-malate from fumarate: step 1/1. In terms of biological role, involved in the TCA cycle. Catalyzes the stereospecific interconversion of fumarate to L-malate. The polypeptide is Fumarate hydratase class II (Prochlorococcus marinus (strain MIT 9313)).